A 332-amino-acid polypeptide reads, in one-letter code: Glycerol-3-phosphate dehydrogenase [NAD(P)+] (332 aa).

Trp-13, Lys-34, and Lys-108 together coordinate NADPH. 3 residues coordinate sn-glycerol 3-phosphate: Lys-108, Gly-136, and Ser-138. Ala-140 contributes to the NADPH binding site. Sn-glycerol 3-phosphate is bound by residues Lys-191, Asp-244, Ser-254, Arg-255, and Asn-256. Lys-191 acts as the Proton acceptor in catalysis. Arg-255 lines the NADPH pocket. NADPH is bound by residues Val-279 and Glu-281.

It belongs to the NAD-dependent glycerol-3-phosphate dehydrogenase family.

Its subcellular location is the cytoplasm. The enzyme catalyses sn-glycerol 3-phosphate + NAD(+) = dihydroxyacetone phosphate + NADH + H(+). The catalysed reaction is sn-glycerol 3-phosphate + NADP(+) = dihydroxyacetone phosphate + NADPH + H(+). Its pathway is membrane lipid metabolism; glycerophospholipid metabolism. Functionally, catalyzes the reduction of the glycolytic intermediate dihydroxyacetone phosphate (DHAP) to sn-glycerol 3-phosphate (G3P), the key precursor for phospholipid synthesis. In Francisella tularensis subsp. holarctica (strain FTNF002-00 / FTA), this protein is Glycerol-3-phosphate dehydrogenase [NAD(P)+].